The primary structure comprises 160 residues: Cytochrome b6-f complex subunit 4 (160 aa).

3 consecutive transmembrane segments (helical) span residues 36–56, 95–115, and 131–151; these read LLYI…GLAV, LLGV…PFLE, and TVFL…TLPI.

The protein belongs to the cytochrome b family. PetD subfamily. As to quaternary structure, the 4 large subunits of the cytochrome b6-f complex are cytochrome b6, subunit IV (17 kDa polypeptide, petD), cytochrome f and the Rieske protein, while the 4 small subunits are petG, petL, petM and petN. The complex functions as a dimer.

The protein localises to the plastid. The protein resides in the chloroplast thylakoid membrane. Functionally, component of the cytochrome b6-f complex, which mediates electron transfer between photosystem II (PSII) and photosystem I (PSI), cyclic electron flow around PSI, and state transitions. The polypeptide is Cytochrome b6-f complex subunit 4 (Spinacia oleracea (Spinach)).